The sequence spans 121 residues: Large ribosomal subunit protein uL14 (121 aa).

Belongs to the universal ribosomal protein uL14 family. In terms of assembly, part of the 50S ribosomal subunit. Forms a cluster with proteins L3 and L19. In the 70S ribosome, L14 and L19 interact and together make contacts with the 16S rRNA in bridges B5 and B8.

Its function is as follows. Binds to 23S rRNA. Forms part of two intersubunit bridges in the 70S ribosome. The sequence is that of Large ribosomal subunit protein uL14 from Aquifex pyrophilus.